A 159-amino-acid chain; its full sequence is Transcription elongation factor A protein-like 1 (159 aa).

Residues 1-99 (MDKPRKENEE…CGVGKHKLEE (99 aa)) form a disordered region. Basic and acidic residues predominate over residues 17-34 (KTDEERPPVEHSPEKQSL). The segment covering 37–54 (QSSEEQSSEEEFFPEELL) has biased composition (acidic residues). Residues 64–80 (SEERPPQEGLSRKDLFE) show a composition bias toward basic and acidic residues.

Belongs to the TFS-II family. TFA subfamily.

It is found in the nucleus. May be involved in transcriptional regulation. Modulates various viral and cellular promoters in a promoter context-dependent manner. Does not bind DNA directly. In Ateles geoffroyi (Black-handed spider monkey), this protein is Transcription elongation factor A protein-like 1.